We begin with the raw amino-acid sequence, 37 residues long: Lambda-hexatoxin-Hv1c (37 aa).

4 disulfides stabilise this stretch: Cys-3-Cys-17, Cys-10-Cys-22, Cys-13-Cys-14, and Cys-16-Cys-32.

This sequence belongs to the neurotoxin 11 (kappa toxin) family. In terms of tissue distribution, expressed by the venom gland.

It is found in the secreted. Its function is as follows. This excitatory toxin inhibits insect calcium-activated potassium (KCa) channels (Slo-type). Pan-neuronal expression in Drosophila is lethal but flies engineered to express the toxin only in clock neurons have defects in circadian rhythm but a normal lifespan. This chain is Lambda-hexatoxin-Hv1c, found in Hadronyche versuta (Blue mountains funnel-web spider).